A 555-amino-acid polypeptide reads, in one-letter code: Carboxysome assembly protein CcmM (555 aa).

Residues 1 to 209 form a has carbonic anhydrase (CA) activity region; the sequence is MAVRSTAAPP…CIAPLRNDQV (209 aa). The active-site Proton donor/acceptor is the Glu56. Zn(2+) contacts are provided by His75, His102, and His107. Residues Cys194 and Cys200 are joined by a disulfide bond. Residues 223–315 form a rbcS-like repeat 1, SSUL1 region; it reads SSEVASNSLG…RVLETIIQRP (93 aa). Disordered regions lie at residues 323 to 351 and 441 to 464; these read TSFKAPASNTNGNGSYHSNGNGNGYSNGA and NGQVAPSSSPRTVVSASSASSGTA. Composition is skewed to low complexity over residues 330-351 and 445-464; these read SNTNGNGSYHSNGNGNGYSNGA and APSSSPRTVVSASSASSGTA. Residues 347–440 are rbcS-like repeat 2, SSUL2; the sequence is YSNGATSGKV…RVLESIIQRP (94 aa). Residues 460-555 are rbcS-like repeat 3, SSUL3; the sequence is SSGTATATAT…RVLETIIQRP (96 aa).

The protein belongs to the gamma-class carbonic anhydrase family. Probable homotrimer; zinc is bound between adjacent monomers. Full length protein (M58) interacts with CcmN. The C-terminal RbcS-like domains (SSUL) bind to holo-RuBisCO, as does the M35 short form. Zn(2+) serves as cofactor. Post-translationally, the first amino acid of the short form (equivalent to Val-226) is not seen in Edman degradation, while Ser-230 may be post-translationally modified. Migrates in gels as 2 about equal forms of about 60 and 35 kDa (called M58 and M35). They are probably the result of alternative translation initiation.

The protein localises to the carboxysome. It localises to the cytoplasm. It carries out the reaction hydrogencarbonate + H(+) = CO2 + H2O. Carbonic anhydrase (CA) activity is probably under redox control to remain inactive in the cytoplasm. Carbonic anhydrase (CA) activity of full-length protein and N-terminal fragment is inhibited by ethoxyzolamide. N-terminal fragment CA activity is activated under oxidizing conditions and inhibited under reducing conditions. Its function is as follows. Functions as a scaffold protein for the assembly of beta-carboxysomes, initiates carboxysome assembly by coalescing RuBisCO (ribulose bisphosphate carboxylase, rbcL-rbcS). Produced as a full-length (M58) and a short form (M35), possibly by alternative translation initiation; probably both forms are required for correct carboxysome assembly and growth. In this strain both forms are equally abundant. A moderately active carbonic anhydrase that catalyzes the reversible hydration of carbon dioxide. Essential to photosynthetic carbon dioxide fixation, supplies CO(2) to ribulose bisphosphate carboxylase (RuBisCO) in the carboxysome. Also hydrolyzes COS. In terms of biological role, beta-carboxysome assembly initiates when soluble RuBisCO is condensed into a liquid matrix in a pre-carboxysome by the RbcS-like domains of probably both forms of CcmM. CcmN interacts with the N-terminus of full length CcmM, and then recruits the shell proteins (CcmK) via CcmN's encapsulation peptide. Shell formation requires both CcmK proteins and CcmO. CcmL caps the otherwise elongated carboxysome. Once fully encapsulated carboxysomes are formed, they migrate within the cell probably via interactions with the cytoskeleton. The polypeptide is Carboxysome assembly protein CcmM (Nostoc sp. (strain PCC 7120 / SAG 25.82 / UTEX 2576)).